We begin with the raw amino-acid sequence, 106 residues long: UPF0060 membrane protein Bphy_5052 (106 aa).

4 helical membrane-spanning segments follow: residues 4–24 (LLLY…PWRW), 30–50 (SVWL…LLTF), 58–78 (VYAA…WCVD), and 82–102 (PSAW…IIAF).

The protein belongs to the UPF0060 family.

The protein resides in the cell inner membrane. In Paraburkholderia phymatum (strain DSM 17167 / CIP 108236 / LMG 21445 / STM815) (Burkholderia phymatum), this protein is UPF0060 membrane protein Bphy_5052.